Reading from the N-terminus, the 109-residue chain is Tektin-3 (109 aa).

It belongs to the tektin family. As to quaternary structure, microtubule inner protein component of sperm flagellar doublet microtubules. Interacts with TEKT1, TEKT2, TEKT4 and TEKT5. Interacts with CCDC38. Post-translationally, N- and O-glycosylated. In terms of processing, may be proteolytically processed during the epididymal transit of spermatozoa. Ubiquitinated, leading to its degradation. Deubiquitinated by USP16, promoting its stability.

It localises to the cytoplasm. Its subcellular location is the cytoskeleton. The protein resides in the cilium axoneme. It is found in the flagellum axoneme. The protein localises to the cytoplasmic vesicle. It localises to the secretory vesicle. Its subcellular location is the acrosome outer membrane. Its function is as follows. Microtubule inner protein (MIP) part of the dynein-decorated doublet microtubules (DMTs) in cilia and flagellar axoneme. Forms filamentous polymers in the walls of ciliary and flagellar microtubules. Required for normal sperm mobility. This is Tektin-3 from Mesocricetus auratus (Golden hamster).